The chain runs to 456 residues: Bifunctional protein GlmU (456 aa).

Residues 1-229 (MLNNAMSVVI…LSEVEGVNNR (229 aa)) are pyrophosphorylase. UDP-N-acetyl-alpha-D-glucosamine is bound by residues 11–14 (LAAG), Lys25, Gln76, 81–82 (GT), 103–105 (YGD), Gly140, Glu154, Asn169, and Asn227. Residue Asp105 participates in Mg(2+) binding. Asn227 contacts Mg(2+). The segment at 230 to 250 (LQLSRLERVYQSEQAEKLLLA) is linker. The N-acetyltransferase stretch occupies residues 251–456 (GVMLRDPARF…EGWRRPVKKK (206 aa)). Residues Arg333 and Lys351 each coordinate UDP-N-acetyl-alpha-D-glucosamine. The active-site Proton acceptor is the His363. UDP-N-acetyl-alpha-D-glucosamine-binding residues include Tyr366 and Asn377. Acetyl-CoA-binding positions include Ala380, 386–387 (NY), Ser405, Ala423, and Arg440.

It in the N-terminal section; belongs to the N-acetylglucosamine-1-phosphate uridyltransferase family. In the C-terminal section; belongs to the transferase hexapeptide repeat family. In terms of assembly, homotrimer. The cofactor is Mg(2+).

It is found in the cytoplasm. The catalysed reaction is alpha-D-glucosamine 1-phosphate + acetyl-CoA = N-acetyl-alpha-D-glucosamine 1-phosphate + CoA + H(+). It catalyses the reaction N-acetyl-alpha-D-glucosamine 1-phosphate + UTP + H(+) = UDP-N-acetyl-alpha-D-glucosamine + diphosphate. Its pathway is nucleotide-sugar biosynthesis; UDP-N-acetyl-alpha-D-glucosamine biosynthesis; N-acetyl-alpha-D-glucosamine 1-phosphate from alpha-D-glucosamine 6-phosphate (route II): step 2/2. It functions in the pathway nucleotide-sugar biosynthesis; UDP-N-acetyl-alpha-D-glucosamine biosynthesis; UDP-N-acetyl-alpha-D-glucosamine from N-acetyl-alpha-D-glucosamine 1-phosphate: step 1/1. It participates in bacterial outer membrane biogenesis; LPS lipid A biosynthesis. Its function is as follows. Catalyzes the last two sequential reactions in the de novo biosynthetic pathway for UDP-N-acetylglucosamine (UDP-GlcNAc). The C-terminal domain catalyzes the transfer of acetyl group from acetyl coenzyme A to glucosamine-1-phosphate (GlcN-1-P) to produce N-acetylglucosamine-1-phosphate (GlcNAc-1-P), which is converted into UDP-GlcNAc by the transfer of uridine 5-monophosphate (from uridine 5-triphosphate), a reaction catalyzed by the N-terminal domain. The polypeptide is Bifunctional protein GlmU (Shigella dysenteriae serotype 1 (strain Sd197)).